Consider the following 143-residue polypeptide: Flagellar assembly factor FliW (143 aa).

The protein belongs to the FliW family. Interacts with translational regulator CsrA and flagellin(s).

Its subcellular location is the cytoplasm. Functionally, acts as an anti-CsrA protein, binds CsrA and prevents it from repressing translation of its target genes, one of which is flagellin. Binds to flagellin and participates in the assembly of the flagellum. The chain is Flagellar assembly factor FliW from Clostridium botulinum (strain ATCC 19397 / Type A).